We begin with the raw amino-acid sequence, 270 residues long: Non-structural maintenance of chromosomes element 1 homolog (270 aa).

Residues 185–226 (CNVCRKVAIQSQLCENCGIPLHLQCAGKYFHGKANPTCPNCN) form an RING-type; atypical zinc finger. Residues 236 to 270 (LNQVSSQGPSHSQTETVRGRNQRSKNTSTASRTSR) are disordered. Polar residues-rich tracts occupy residues 237 to 251 (NQVSSQGPSHSQTET) and 259 to 270 (SKNTSTASRTSR).

The protein belongs to the NSE1 family. In terms of assembly, component of the SMC5-SMC6 complex.

It localises to the nucleus. The protein localises to the chromosome. Its subcellular location is the telomere. It catalyses the reaction S-ubiquitinyl-[E2 ubiquitin-conjugating enzyme]-L-cysteine + [acceptor protein]-L-lysine = [E2 ubiquitin-conjugating enzyme]-L-cysteine + N(6)-ubiquitinyl-[acceptor protein]-L-lysine.. In terms of biological role, RING-type zinc finger-containing E3 ubiquitin ligase that assembles with melanoma antigen protein (MAGE) to catalyze the direct transfer of ubiquitin from E2 ubiquitin-conjugating enzyme to a specific substrate. Within MAGE-RING ubiquitin ligase complex, MAGE stimulates and specifies ubiquitin ligase activity likely through recruitment and/or stabilization of the E2 ubiquitin-conjugating enzyme at the E3:substrate complex. Involved in maintenance of genome integrity, DNA damage response and DNA repair. The chain is Non-structural maintenance of chromosomes element 1 homolog (nsmce1) from Xenopus laevis (African clawed frog).